Reading from the N-terminus, the 339-residue chain is UPF0324 membrane protein spyM18_1033 (339 aa).

Transmembrane regions (helical) follow at residues 7 to 24 (KLPG…AWYL), 28 to 50 (FPII…FYGH), 57 to 79 (GISF…GLNL), 84 to 106 (AVGM…VAYG), 118 to 140 (ATLV…APVI), 150 to 172 (AISV…GQLL), 256 to 275 (FILF…SFGV), 290 to 307 (FIVM…LVKL), and 314 to 336 (AILL…QLSL).

Belongs to the UPF0324 family.

The protein resides in the cell membrane. This Streptococcus pyogenes serotype M18 (strain MGAS8232) protein is UPF0324 membrane protein spyM18_1033.